We begin with the raw amino-acid sequence, 469 residues long: MEPAQQPPPQPAPQGPAPPSVSPAGTPAAPPAPPAGHQVVHVRGDSETDLEALFNAVMNPKTANVPQTVPMRLRKLPDSFFKPPEPKSHSRQASTDAGTAGALTPQHVRAHSSPASLQLGAGTLTASGVVSGPAATPAAQHLRQSSFEIPDDVPLPAGWEMAKTSSGQRYFLNHNDQTTTWQDPRKAMLSQLNVPTSASPAVPQTLMNSASGPLPDGWEQAMTQDGEVYYINHKNKTTSWLDPRLDPRFAMNQRITQSAPVKQPPPLAPQSPQGGVLGGGSSNQQQQIQLQQLQMEKERLRLKQQELFRQELALRSQLPSLEQDGGTQNAVSSPGMTQELRTMTTNSSDPFLNSGTYHSRDESTDSGLSMSSYSIPRTPDDFLNSVDEMDTGDTISQSTLPSQQSRFPDYLEALPGTNVDLGTLEGDAMNIEGEELMPSLQEALSSEILDVESVLAATKLDKESFLTWL.

Residues 1-21 (MEPAQQPPPQPAPQGPAPPSV) show a composition bias toward pro residues. Residues 1–47 (MEPAQQPPPQPAPQGPAPPSVSPAGTPAAPPAPPAGHQVVHVRGDSE) form a disordered region. Ser46 bears the Phosphoserine mark. Residue Thr48 is modified to Phosphothreonine. A coiled-coil region spans residues 71-85 (MRLRKLPDSFFKPPE). N6-lactoyllysine is present on Lys75. The tract at residues 76-99 (LPDSFFKPPEPKSHSRQASTDAGT) is disordered. Residues Ser90 and Ser94 each carry the phosphoserine modification. Residues Thr95 and Thr104 each carry the phosphothreonine modification. Ser112 is modified (phosphoserine; by LATS1 and LATS2). Phosphoserine occurs at positions 113 and 116. Phosphothreonine; by MAPK8 and MAPK9 is present on Thr136. Phosphoserine; by LATS1 and LATS2 is present on Ser146. WW domains lie at 153–186 (VPLP…DPRK) and 212–245 (GPLP…DPRL). Residues 258-290 (SAPVKQPPPLAPQSPQGGVLGGGSSNQQQQIQL) form a disordered region. 2 positions are modified to phosphoserine: Ser271 and Ser320. The tract at residues 273-469 (QGGVLGGGSS…LDKESFLTWL (197 aa)) is transactivation domain. A coiled-coil region spans residues 280–325 (GSSNQQQQIQLQQLQMEKERLRLKQQELFRQELALRSQLPSLEQDG). Phosphoserine; by MAPK8 and MAPK9 is present on Ser333. A compositionally biased stretch (polar residues) spans 345–357 (TNSSDPFLNSGTY). The disordered stretch occupies residues 345 to 405 (TNSSDPFLNS…SQSTLPSQQS (61 aa)). Phosphoserine occurs at positions 347, 348, and 354. Ser363 is subject to Phosphoserine; by LATS1 and LATS2. The segment covering 365–375 (DSGLSMSSYSI) has biased composition (polar residues). 2 positions are modified to phosphoserine; by CK1: Ser366 and Ser369. Tyr373 is modified (phosphotyrosine; by ABL1). Position 378 is a phosphothreonine; by MAPK8 and MAPK9 (Thr378). Residues 393–405 (DTISQSTLPSQQS) are compositionally biased toward polar residues.

This sequence belongs to the YAP1 family. As to quaternary structure, part of a complex when phosphorylated that contains DSG3, PKP1, YAP1 and YWHAG; the complex is required for localization of DSG3 and YAP1 to the cell membrane in keratinocytes. Binds to the SH3 domain of the YES kinase. Binds to WBP1 and WBP2. Binds, in vitro, through the WW1 domain, to neural isoforms of ENAH that contain the PPSY motif. The phosphorylated form interacts with YWHAB. Interacts (via WW domains) with LATS1 (via PPxY motif 2). Interacts with LATS2. Interacts (via WW domain 1) with ERBB4 (via PPxY motif 2). Interacts with TEAD1, TEAD2, TEAD3 and TEAD4. Interacts with TP73. Interacts with RUNX1. Interacts with HCK. Interacts (via WW domains) with PTPN14 (via PPxY motif 2); this interaction leads to the cytoplasmic sequestration of YAP1 and inhibits its transcriptional coactivator activity. Interacts (when phosphorylated at Ser-112) with SMAD2, SMAD3 and WWTR1. Interacts with PRRG2 (via cytoplasmic domain). Interacts (via WW domains) with PRRG4 (via cytoplasmic domain). Interacts (phosphorylated) with CLDN18; the interaction sequesters YAP1 away from the nucleus and thereby restricts transcription of YAP1 target genes. Interacts with SMAD1. Interacts with AMOT; the interaction facilitates translocation of YAP1 to the cytoplasm and tight junctions. Interacts with AMOTL2, the interaction is required for ubiquitination of AMOTL2 and localization of YAP1 to tight junctions. Phosphorylated by LATS1 and LATS2; leading to cytoplasmic translocation and inactivation. Phosphorylated by ABL1; leading to YAP1 stabilization, enhanced interaction with TP73 and recruitment onto proapoptotic genes; in response to DNA damage. Phosphorylation at Ser-366 and Ser-369 by CK1 is triggered by previous phosphorylation at Ser-363 by LATS proteins and leads to YAP1 ubiquitination by SCF(beta-TRCP) E3 ubiquitin ligase and subsequent degradation. Phosphorylated at Thr-104, Thr-136, Ser-333 and Thr-378 by MAPK8/JNK1 and MAPK9/JNK2, which is required for the regulation of apoptosis by YAP1. In terms of processing, lactylation by AARS1 promotes nuclear localization and stabilization of YAP1, leading to increased Hippo signaling pathway. Delactylated by SIRT1. Post-translationally, ubiquitinated by SCF(beta-TRCP) E3 ubiquitin ligase. Highly specific to cortical neurons.

The protein resides in the cytoplasm. It localises to the nucleus. The protein localises to the cell junction. It is found in the tight junction. Its subcellular location is the cell membrane. In terms of biological role, transcriptional regulator with dual roles as a coactivator and corepressor. Critical downstream regulatory target in the Hippo signaling pathway, crucial for organ size control and tumor suppression by restricting proliferation and promoting apoptosis. The Hippo signaling pathway core involves a kinase cascade featuring STK3/MST2 and STK4/MST1, along with its regulatory partner SAV1, which phosphorylates and activates LATS1/2 in complex with their regulatory protein, MOB1. This activation leads to the phosphorylation and inactivation of the YAP1 oncoprotein and WWTR1/TAZ. Phosphorylation of YAP1 by LATS1/2 prevents its nuclear translocation, thereby regulating the expression of its target genes. The transcriptional regulation of gene expression requires TEAD transcription factors and modulates cell growth, anchorage-independent growth, and induction of epithelial-mesenchymal transition (EMT). Plays a key role in tissue tension and 3D tissue shape by regulating the cortical actomyosin network, acting via ARHGAP18, a Rho GTPase activating protein that suppresses F-actin polymerization. It also suppresses ciliogenesis by acting as a transcriptional corepressor of TEAD4 target genes AURKA and PLK1. In conjunction with WWTR1, regulates TGFB1-dependent SMAD2 and SMAD3 nuclear accumulation. Synergizes with WBP2 to enhance PGR activity. Attenuates p73-mediated cell death signaling in transcriptional repression-induced atypical death (TRIAD) of neurons. This is Transcriptional coactivator YAP1 (Yap1) from Rattus norvegicus (Rat).